A 436-amino-acid polypeptide reads, in one-letter code: 3-ketoacyl-CoA thiolase (436 aa).

Cys-99 (acyl-thioester intermediate) is an active-site residue. Active-site proton acceptor residues include His-392 and Cys-422.

Belongs to the thiolase-like superfamily. Thiolase family. As to quaternary structure, heterotetramer of two alpha chains (FadJ) and two beta chains (FadI).

It localises to the cytoplasm. It carries out the reaction an acyl-CoA + acetyl-CoA = a 3-oxoacyl-CoA + CoA. The protein operates within lipid metabolism; fatty acid beta-oxidation. In terms of biological role, catalyzes the final step of fatty acid oxidation in which acetyl-CoA is released and the CoA ester of a fatty acid two carbons shorter is formed. The chain is 3-ketoacyl-CoA thiolase from Salmonella choleraesuis (strain SC-B67).